Here is a 487-residue protein sequence, read N- to C-terminus: NADH-quinone oxidoreductase subunit N (487 aa).

The next 13 membrane-spanning stretches (helical) occupy residues Ile7–Val27, Leu38–Ala58, Tyr79–Leu99, Ile111–Ala131, Phe164–Phe184, Leu207–Phe227, Ala238–Phe258, Val276–Thr296, Leu301–Thr321, Val328–Ala348, Ala373–Phe393, Gly406–Leu426, and Val451–Val471.

The protein belongs to the complex I subunit 2 family. NDH-1 is composed of 14 different subunits. Subunits NuoA, H, J, K, L, M, N constitute the membrane sector of the complex.

The protein localises to the cell inner membrane. It catalyses the reaction a quinone + NADH + 5 H(+)(in) = a quinol + NAD(+) + 4 H(+)(out). Its function is as follows. NDH-1 shuttles electrons from NADH, via FMN and iron-sulfur (Fe-S) centers, to quinones in the respiratory chain. The immediate electron acceptor for the enzyme in this species is believed to be ubiquinone. Couples the redox reaction to proton translocation (for every two electrons transferred, four hydrogen ions are translocated across the cytoplasmic membrane), and thus conserves the redox energy in a proton gradient. This Rhodospirillum rubrum (strain ATCC 11170 / ATH 1.1.1 / DSM 467 / LMG 4362 / NCIMB 8255 / S1) protein is NADH-quinone oxidoreductase subunit N.